We begin with the raw amino-acid sequence, 159 residues long: 2-C-methyl-D-erythritol 2,4-cyclodiphosphate synthase (159 aa).

A divalent metal cation contacts are provided by D10 and H12. 4-CDP-2-C-methyl-D-erythritol 2-phosphate is bound by residues D10–H12 and H36–S37. Residue H44 coordinates a divalent metal cation. 4-CDP-2-C-methyl-D-erythritol 2-phosphate contacts are provided by residues D58 to G60, F63 to D67, and R144.

Belongs to the IspF family. In terms of assembly, homotrimer. It depends on a divalent metal cation as a cofactor.

It catalyses the reaction 4-CDP-2-C-methyl-D-erythritol 2-phosphate = 2-C-methyl-D-erythritol 2,4-cyclic diphosphate + CMP. It participates in isoprenoid biosynthesis; isopentenyl diphosphate biosynthesis via DXP pathway; isopentenyl diphosphate from 1-deoxy-D-xylulose 5-phosphate: step 4/6. Involved in the biosynthesis of isopentenyl diphosphate (IPP) and dimethylallyl diphosphate (DMAPP), two major building blocks of isoprenoid compounds. Catalyzes the conversion of 4-diphosphocytidyl-2-C-methyl-D-erythritol 2-phosphate (CDP-ME2P) to 2-C-methyl-D-erythritol 2,4-cyclodiphosphate (ME-CPP) with a corresponding release of cytidine 5-monophosphate (CMP). The sequence is that of 2-C-methyl-D-erythritol 2,4-cyclodiphosphate synthase from Paraburkholderia xenovorans (strain LB400).